The primary structure comprises 186 residues: Probable calcium-binding protein CML25 (186 aa).

A compositionally biased stretch (low complexity) spans 1-17 (MFNKNQGSNGGSSSNVG). Positions 1–23 (MFNKNQGSNGGSSSNVGIGADSP) are disordered. 4 consecutive EF-hand domains span residues 33 to 68 (TEIR…LGHE), 69 to 104 (VPEE…GMDQ), 106 to 141 (DVLE…LGDE), and 142 to 177 (CSIA…GSRR). 5 residues coordinate Ca(2+): D46, N48, D50, K52, and E57. Ca(2+)-binding residues include D119, D121, N123, S125, E130, D155, D157, D159, T161, and E166.

Its function is as follows. Potential calcium sensor. This Arabidopsis thaliana (Mouse-ear cress) protein is Probable calcium-binding protein CML25 (CML25).